The chain runs to 160 residues: Putative 4-hydroxy-4-methyl-2-oxoglutarate aldolase (160 aa).

Residues 75–78 and R97 contribute to the substrate site; that span reads GDQL. D98 lines the a divalent metal cation pocket.

It belongs to the class II aldolase/RraA-like family. Homotrimer. The cofactor is a divalent metal cation.

The enzyme catalyses 4-hydroxy-4-methyl-2-oxoglutarate = 2 pyruvate. It carries out the reaction oxaloacetate + H(+) = pyruvate + CO2. Its function is as follows. Catalyzes the aldol cleavage of 4-hydroxy-4-methyl-2-oxoglutarate (HMG) into 2 molecules of pyruvate. Also contains a secondary oxaloacetate (OAA) decarboxylase activity due to the common pyruvate enolate transition state formed following C-C bond cleavage in the retro-aldol and decarboxylation reactions. This is Putative 4-hydroxy-4-methyl-2-oxoglutarate aldolase from Vibrio vulnificus (strain YJ016).